A 359-amino-acid chain; its full sequence is Protein Wnt-5b (359 aa).

Residues 1-17 (MPSLLLLFTAALLSSWA) form the signal peptide. A disulfide bridge connects residues cysteine 83 and cysteine 94. N-linked (GlcNAc...) asparagine glycans are attached at residues asparagine 93 and asparagine 99. Disulfide bonds link cysteine 133–cysteine 141, cysteine 143–cysteine 161, cysteine 217–cysteine 231, cysteine 219–cysteine 226, cysteine 288–cysteine 319, cysteine 304–cysteine 314, cysteine 318–cysteine 358, cysteine 334–cysteine 349, cysteine 336–cysteine 346, and cysteine 341–cysteine 342. Serine 223 is lipidated: O-palmitoleoyl serine; by PORCN. Asparagine 291 and asparagine 305 each carry an N-linked (GlcNAc...) asparagine glycan.

Belongs to the Wnt family. Interacts with PORCN. Post-translationally, palmitoleoylation is required for efficient binding to frizzled receptors. Depalmitoleoylation leads to Wnt signaling pathway inhibition.

It is found in the secreted. The protein resides in the extracellular space. The protein localises to the extracellular matrix. Ligand for members of the frizzled family of seven transmembrane receptors. Probable developmental protein. May be a signaling molecule which affects the development of discrete regions of tissues. Is likely to signal over only few cell diameters. This is Protein Wnt-5b (WNT5B) from Homo sapiens (Human).